A 268-amino-acid polypeptide reads, in one-letter code: Syntaxin-22 (268 aa).

A disordered region spans residues 1–23 (MSFQDLESGRGRSTRKFNGGRQD). At S2 the chain carries N-acetylserine. The Cytoplasmic segment spans residues 2–246 (SFQDLESGRG…AAKTQKSNSS (245 aa)). In terms of domain architecture, t-SNARE coiled-coil homology spans 175–237 (EAVIEEREQG…SQGKSQLVQA (63 aa)). A helical; Anchor for type IV membrane protein membrane pass occupies residues 247 to 267 (LTCLLLVIFGIVLLIVIIVLA). A268 is a topological domain (vesicular).

The protein belongs to the syntaxin family. In terms of assembly, interacts with VTI11 and SYP51 to form a t-SNARE complex, but not with VPS45. In terms of tissue distribution, expressed in roots, leaves, stems, flower and green siliques.

It is found in the prevacuolar compartment membrane. It localises to the vacuole membrane. Functionally, may provide the t-SNARE function in the vacuolar assembly. Promotes the formation of vacuolar membrane 'bulbs'. Required for inflorescence stem gravitropism. In Arabidopsis thaliana (Mouse-ear cress), this protein is Syntaxin-22 (SYP22).